A 397-amino-acid chain; its full sequence is Major outer membrane porin, serovar H (397 aa).

Positions 1 to 22 (MKKLLKSVLVFAALSSASSLQA) are cleaved as a signal peptide.

Belongs to the chlamydial porin (CP) (TC 1.B.2) family. As to quaternary structure, part of a disulfide cross-linked outer membrane complex (COMC) composed of the major outer membrane porin (MOMP), the small cysteine-rich protein (OmcA) and the large cysteine-rich periplasmic protein (OmcB).

The protein resides in the cell outer membrane. In elementary bodies (EBs, the infectious stage, which is able to survive outside the host cell) provides the structural integrity of the outer envelope through disulfide cross-links with the small cysteine-rich protein and the large cysteine-rich periplasmic protein. It has been described in publications as the Sarkosyl-insoluble COMC (Chlamydia outer membrane complex), and serves as the functional equivalent of peptidoglycan. Functionally, permits diffusion of specific solutes through the outer membrane. The protein is Major outer membrane porin, serovar H (ompA) of Chlamydia trachomatis.